A 264-amino-acid chain; its full sequence is Endochitinase At2g43590 (264 aa).

The signal sequence occupies residues 1 to 24 (MAFTKISLVLLLCLLGFFSETVKS). The 35-residue stretch at 25–59 (QNCGCAPNLCCSQFGYCGTDDAYCGVGCRSGPCRG) folds into the Chitin-binding type-1 domain. 4 disulfides stabilise this stretch: Cys-27–Cys-35, Cys-29–Cys-41, Cys-34–Cys-48, and Cys-52–Cys-57. The interval 66–264 (GSVGSIVTQG…GVDPGPNLSC (199 aa)) is catalytic. Glu-128 (proton donor) is an active-site residue. N-linked (GlcNAc...) asparagine glycosylation is present at Asn-261.

The protein belongs to the glycosyl hydrolase 19 family. Chitinase class I subfamily.

It carries out the reaction Random endo-hydrolysis of N-acetyl-beta-D-glucosaminide (1-&gt;4)-beta-linkages in chitin and chitodextrins.. The sequence is that of Endochitinase At2g43590 from Arabidopsis thaliana (Mouse-ear cress).